Here is a 337-residue protein sequence, read N- to C-terminus: tRNA N6-adenosine threonylcarbamoyltransferase (337 aa).

Residues H111 and H115 each coordinate Fe cation. Residues 134 to 138 (LVSGG), D167, G180, and N272 each bind substrate. Residue D300 participates in Fe cation binding.

It belongs to the KAE1 / TsaD family. Fe(2+) serves as cofactor.

It localises to the cytoplasm. The catalysed reaction is L-threonylcarbamoyladenylate + adenosine(37) in tRNA = N(6)-L-threonylcarbamoyladenosine(37) in tRNA + AMP + H(+). Its function is as follows. Required for the formation of a threonylcarbamoyl group on adenosine at position 37 (t(6)A37) in tRNAs that read codons beginning with adenine. Is involved in the transfer of the threonylcarbamoyl moiety of threonylcarbamoyl-AMP (TC-AMP) to the N6 group of A37, together with TsaE and TsaB. TsaD likely plays a direct catalytic role in this reaction. This is tRNA N6-adenosine threonylcarbamoyltransferase from Yersinia pseudotuberculosis serotype I (strain IP32953).